Consider the following 32-residue polypeptide: MSDIN-like toxin proprotein 11 (32 aa).

The propeptide occupies 1–10 (MSDINATRLP). The disordered stretch occupies residues 1 to 32 (MSDINATRLPGMEPPSPMPCVGDADNFTLTRG). The segment at residues 11–19 (GMEPPSPMP) is a cross-link (cyclopeptide (Gly-Pro)). The propeptide occupies 20 to 32 (CVGDADNFTLTRG).

It belongs to the MSDIN fungal toxin family. Post-translationally, processed by the macrocyclase-peptidase enzyme POPB to yield a toxic cyclic nonapeptide. POPB first removes 10 residues from the N-terminus. Conformational trapping of the remaining peptide forces the enzyme to release this intermediate rather than proceed to macrocyclization. The enzyme rebinds the remaining peptide in a different conformation and catalyzes macrocyclization of the N-terminal 9 residues.

In terms of biological role, probable toxin that belongs to the MSDIN-like toxin family responsible for a large number of food poisoning cases and deaths. The polypeptide is MSDIN-like toxin proprotein 11 (Amanita bisporigera (Destroying angel)).